The chain runs to 290 residues: uncharacterized protein (290 aa).

Belongs to the UreD family.

Its subcellular location is the cytoplasm. The protein resides in the nucleus. Probably facilitates nickel incorporation. This is an uncharacterized protein from Schizosaccharomyces pombe (strain 972 / ATCC 24843) (Fission yeast).